The following is a 138-amino-acid chain: Phosphoribosyl-AMP cyclohydrolase (138 aa).

Asp-86 is a binding site for Mg(2+). Cys-87 is a Zn(2+) binding site. Mg(2+) contacts are provided by Asp-88 and Asp-90. Cys-104 and Cys-111 together coordinate Zn(2+).

It belongs to the PRA-CH family. In terms of assembly, homodimer. The cofactor is Mg(2+). Zn(2+) serves as cofactor.

It localises to the cytoplasm. It carries out the reaction 1-(5-phospho-beta-D-ribosyl)-5'-AMP + H2O = 1-(5-phospho-beta-D-ribosyl)-5-[(5-phospho-beta-D-ribosylamino)methylideneamino]imidazole-4-carboxamide. Its pathway is amino-acid biosynthesis; L-histidine biosynthesis; L-histidine from 5-phospho-alpha-D-ribose 1-diphosphate: step 3/9. In terms of biological role, catalyzes the hydrolysis of the adenine ring of phosphoribosyl-AMP. The chain is Phosphoribosyl-AMP cyclohydrolase from Marinobacter nauticus (strain ATCC 700491 / DSM 11845 / VT8) (Marinobacter aquaeolei).